An 83-amino-acid chain; its full sequence is MSSGGLLLLLGLLTLWAELTPVSSKDRPEFCELPPDRGTCMGFLQAFYYNPSQNKCLPFMFGGCKANPNNFKTLEECKRTCAA.

The N-terminal stretch at 1–24 (MSSGGLLLLLGLLTLWAELTPVSS) is a signal peptide. In terms of domain architecture, BPTI/Kunitz inhibitor spans 31–81 (CELPPDRGTCMGFLQAFYYNPSQNKCLPFMFGGCKANPNNFKTLEECKRTC). Intrachain disulfides connect Cys31/Cys81, Cys40/Cys64, and Cys56/Cys77.

It belongs to the venom Kunitz-type family. Expressed by the venom gland.

It localises to the secreted. Functionally, serine protease inhibitor. The protein is Kunitz-type serine protease inhibitor vestiginin-1 of Demansia vestigiata (Lesser black whip snake).